Reading from the N-terminus, the 243-residue chain is Small ribosomal subunit protein uS3 (243 aa).

Positions 38–106 (IRKYLNARLA…DIQINIFEVK (69 aa)) constitute a KH type-2 domain. Residues 214-243 (PNFTQSKESGRGNNGGNNGGKNFKRKKNNR) form a disordered region.

This sequence belongs to the universal ribosomal protein uS3 family. Part of the 30S ribosomal subunit. Forms a tight complex with proteins S10 and S14.

In terms of biological role, binds the lower part of the 30S subunit head. Binds mRNA in the 70S ribosome, positioning it for translation. The chain is Small ribosomal subunit protein uS3 from Bacteroides thetaiotaomicron (strain ATCC 29148 / DSM 2079 / JCM 5827 / CCUG 10774 / NCTC 10582 / VPI-5482 / E50).